Here is a 463-residue protein sequence, read N- to C-terminus: MTSETRTLYSQLPAIDRLLHDSAFLSLRDRYGHTQVVDLLRRMLDDARDVIRNTQTLPDWYADWAQEAKLRLENAAQSALRPVINLTGTVLHTNLGRALQAQEAVEAVTQAMRAPVTLEYDLDGAGRGHRDRALATLLCRITGAEDACIVNNNAAAVLLMLAATASGKEVVVSRGELVEIGGAFRIPDVMRQAGCTLHEVGTTNRTHAKDYRQAVNENTGLLMKVHTSNYSIEGFTKTVEEAELAEIGRELDIPVVADLGSGSLVDLSQYGLPKEPMPQQLIAAGVSLVSFSGDKLLGGPQAGIIVGKKAMIAQLQSHPLKRALRADKMTLAALEATLRLYLHPEALAEKLPTLRLLTRSEASIREQAQRLQARLAARYGDEFALEVKPCLSQIGSGSLPVDRLPSAAMTFTPHDGRGSRLEALAARWRMLPVPVIGRIYDGRLWLDMRCLEDESRFMEMMLK.

Lys295 bears the N6-(pyridoxal phosphate)lysine mark.

This sequence belongs to the SelA family. Homodecamer; pentamer of dimers. Binds only one seryl-tRNA(Sec) per dimer. Requires pyridoxal 5'-phosphate as cofactor.

It is found in the cytoplasm. The enzyme catalyses L-seryl-tRNA(Sec) + selenophosphate + H(+) = L-selenocysteinyl-tRNA(Sec) + phosphate. It functions in the pathway aminoacyl-tRNA biosynthesis; selenocysteinyl-tRNA(Sec) biosynthesis; selenocysteinyl-tRNA(Sec) from L-seryl-tRNA(Sec) (bacterial route): step 1/1. Functionally, converts seryl-tRNA(Sec) to selenocysteinyl-tRNA(Sec) required for selenoprotein biosynthesis. This chain is L-seryl-tRNA(Sec) selenium transferase, found in Salmonella enteritidis PT4 (strain P125109).